The chain runs to 442 residues: Transcriptional coactivator YAP1 (442 aa).

3 positions are modified to phosphoserine; by LATS1 and LATS2: S21, S69, and S87. 2 disordered regions span residues 51–89 (LPDS…HSSP) and 97–116 (VSPG…QHLR). S119 bears the Phosphoserine; by LATS1 and LATS2 mark. WW domains lie at 126-159 (MPLP…DPRK) and 186-219 (GPLP…DPRL). A disordered region spans residues 230-254 (ISQSAPVKQGSQLPSSPQSGVMSGN). Residues 238-249 (QGSQLPSSPQSG) show a composition bias toward low complexity. The transactivation domain stretch occupies residues 247-442 (QSGVMSGNNP…IDKENFLTWL (196 aa)). Positions 258–279 (RLQQIHIEKERLRIKQELLRQR) form a coiled coil. Residues 286–374 (RNQLPTSMEQ…DTLGPGSMAT (89 aa)) form a disordered region. Polar residues-rich tracts occupy residues 288-304 (QLPT…NPVS), 313-329 (RNMT…SGTY), and 337-347 (DSGLSMSSYSV).

The protein belongs to the YAP1 family. In terms of processing, phosphorylated by lats1 and lats2; leading to cytoplasmic translocation and inactivation. As to expression, expressed in the notochord, brain, eyes, branchial arches and pectoral fins.

The protein resides in the cytoplasm. It localises to the nucleus. It is found in the cell junction. The protein localises to the tight junction. Its subcellular location is the cell membrane. Transcriptional regulator which can act both as a coactivator and a corepressor and is the critical downstream regulatory target in the Hippo signaling pathway that plays a pivotal role in organ size control and tumor suppression by restricting proliferation and promoting apoptosis. Required for expansion of the neural plate and neural plate border zone progenitor pools. Acts as a direct regulator of pax3 expression via interaction with tead1. Plays a key role in tissue tension and 3D tissue shape by regulating cortical actomyosin network formation. The chain is Transcriptional coactivator YAP1 (yap1) from Danio rerio (Zebrafish).